The following is a 726-amino-acid chain: Beta-glucosidase cel3A (726 aa).

The first 20 residues, 1–20, serve as a signal peptide directing secretion; the sequence is MASRLVAGLQVLALAGTATA. N-linked (GlcNAc...) asparagine glycans are attached at residues Asn223 and Asn592.

Belongs to the glycosyl hydrolase 3 family.

It is found in the secreted. The enzyme catalyses Hydrolysis of terminal, non-reducing beta-D-glucosyl residues with release of beta-D-glucose.. It participates in glycan metabolism; cellulose degradation. Its function is as follows. Beta-glucosidases are one of a number of cellulolytic enzymes involved in the degradation of cellulosic biomass. Catalyzes the last step releasing glucose from the inhibitory cellobiose. Has a broad substrate specificity but preferentially hydrolyzes highly polymerized 1,3- and 1,4-beta-glucans. This is Beta-glucosidase cel3A from Pyricularia oryzae (strain 70-15 / ATCC MYA-4617 / FGSC 8958) (Rice blast fungus).